We begin with the raw amino-acid sequence, 769 residues long: Disintegrin and metalloproteinase domain-containing protein 11 (769 aa).

Positions 1–23 are cleaved as a signal peptide; sequence MRLLRRWAFAALLLSLLPTPGLG. The propeptide occupies 24-225; that stretch reads TQGPAGALRW…PNRPRLRRKR (202 aa). The tract at residues 40-78 is disordered; the sequence is GGPGAPEVTEPSRLVRESSGGEVRKQQLDTRVRQEPPGG. A compositionally biased stretch (basic and acidic residues) spans 61–73; that stretch reads EVRKQQLDTRVRQ. N-linked (GlcNAc...) asparagine glycosylation is found at asparagine 96 and asparagine 163. Topologically, residues 226–734 are extracellular; that stretch reads QVRRGHPTVH…ERYKGPSGTN (509 aa). Residues 239–438 form the Peptidase M12B domain; it reads KYVELIVIND…GGGSCLFNKP (200 aa). Positions 332–769 are required for localization to cerebellar cortex basket cell terminals. Also required for localization of KCNA1, KCNA2, DLG4 and ADAM22 to cerebellar cortex basket cell terminal perisomatic axons and pinceaux; the sequence is GRTFQSTSSG…NIRRGRSGGA (438 aa). Disulfide bonds link cysteine 349–cysteine 433, cysteine 392–cysteine 417, cysteine 394–cysteine 401, and cysteine 503–cysteine 523. One can recognise a Disintegrin domain in the interval 444–531; that stretch reads PPECGNGFVE…QCPPNLHKLD (88 aa). Residues asparagine 605 and asparagine 673 are each glycosylated (N-linked (GlcNAc...) asparagine). Intrachain disulfides connect cysteine 677–cysteine 692, cysteine 686–cysteine 698, and cysteine 700–cysteine 709. In terms of domain architecture, EGF-like spans 677–709; the sequence is CPGSGERRICSHHGVCSNEGKCICQPDWTGKDC. A helical transmembrane segment spans residues 735–755; that stretch reads IIIGSIAGAVLVAAIVLGGTG. At 756–769 the chain is on the cytoplasmic side; sequence WGFKNIRRGRSGGA.

In terms of assembly, interacts with LGI1 and LGI4. Interacts with KCNA1/KV1.1, KCNA2/KV1.2, DLG4/PSD-95 and ADAM22. In terms of processing, the precursor is cleaved by a furin endopeptidase. Expressed predominantly in brain. Slightly detected or not at all in other tissues.

It localises to the presynaptic cell membrane. The protein localises to the perikaryon. The protein resides in the cell projection. Its subcellular location is the axon. Its function is as follows. Probable ligand for integrin in the brain. This is a non catalytic metalloprotease-like protein. Required for localization of the potassium channel subunit proteins KCNA1/KV1.1 and KCNA2/KV1.2 at cerebellar cortex basket cell distal terminals, is thereby involved in ephaptic inhibitory synchronization of Purkinje cell firing and response to stress. Plays a role in spatial learning and motor coordination. Involved in the nociceptive pain response to chemical-derived stimulation. In Homo sapiens (Human), this protein is Disintegrin and metalloproteinase domain-containing protein 11 (ADAM11).